The sequence spans 282 residues: 2-dehydro-3-deoxyphosphooctonate aldolase (282 aa).

It belongs to the KdsA family.

It is found in the cytoplasm. The catalysed reaction is D-arabinose 5-phosphate + phosphoenolpyruvate + H2O = 3-deoxy-alpha-D-manno-2-octulosonate-8-phosphate + phosphate. It participates in carbohydrate biosynthesis; 3-deoxy-D-manno-octulosonate biosynthesis; 3-deoxy-D-manno-octulosonate from D-ribulose 5-phosphate: step 2/3. It functions in the pathway bacterial outer membrane biogenesis; lipopolysaccharide biosynthesis. This Shewanella baltica (strain OS223) protein is 2-dehydro-3-deoxyphosphooctonate aldolase.